Consider the following 678-residue polypeptide: Ribonuclease Z 2, mitochondrial (678 aa).

A mitochondrion-targeting transit peptide spans 1 to 37 (MKASLLVPRRALLFGQLLPPKYSWYSVKRWQSQLTFR).

It belongs to the RNase Z family. Zn(2+) serves as cofactor.

It is found in the mitochondrion. Its subcellular location is the cytoplasm. The catalysed reaction is Endonucleolytic cleavage of RNA, removing extra 3' nucleotides from tRNA precursor, generating 3' termini of tRNAs. A 3'-hydroxy group is left at the tRNA terminus and a 5'-phosphoryl group is left at the trailer molecule.. Functionally, zinc phosphodiesterase, which displays some tRNA 3'-processing endonuclease activity. May be involved in tRNA maturation, by removing a 3'-trailer from precursor tRNA. This chain is Ribonuclease Z 2, mitochondrial (trz2), found in Schizosaccharomyces pombe (strain 972 / ATCC 24843) (Fission yeast).